The chain runs to 776 residues: Mitochondrial intermediate peptidase (776 aa).

The transit peptide at M1–S28 directs the protein to the mitochondrion. Residue H561 participates in Zn(2+) binding. E562 is an active-site residue. Zn(2+) contacts are provided by H565 and H568.

The protein belongs to the peptidase M3 family. The cofactor is Zn(2+).

The protein localises to the mitochondrion matrix. The catalysed reaction is Release of an N-terminal octapeptide as second stage of processing of some proteins imported into the mitochondrion.. Functionally, cleaves proteins, imported into the mitochondrion, to their mature size. While most mitochondrial precursor proteins are processed to the mature form in one step by mitochondrial processing peptidase (MPP), the sequential cleavage by MIP of an octapeptide after initial processing by MPP is a required step for a subgroup of nuclear-encoded precursor proteins destined for the matrix or the inner membrane. This is Mitochondrial intermediate peptidase (OCT1) from Yarrowia lipolytica (strain CLIB 122 / E 150) (Yeast).